A 100-amino-acid chain; its full sequence is Urease subunit gamma (100 aa).

The protein belongs to the urease gamma subunit family. As to quaternary structure, heterotrimer of UreA (gamma), UreB (beta) and UreC (alpha) subunits. Three heterotrimers associate to form the active enzyme.

The protein resides in the cytoplasm. The enzyme catalyses urea + 2 H2O + H(+) = hydrogencarbonate + 2 NH4(+). Its pathway is nitrogen metabolism; urea degradation; CO(2) and NH(3) from urea (urease route): step 1/1. This Citrobacter koseri (strain ATCC BAA-895 / CDC 4225-83 / SGSC4696) protein is Urease subunit gamma.